Reading from the N-terminus, the 485-residue chain is Cytoplasmic tRNA 2-thiolation protein 2 (485 aa).

It belongs to the CTU2/NCS2 family.

The protein resides in the cytoplasm. It participates in tRNA modification; 5-methoxycarbonylmethyl-2-thiouridine-tRNA biosynthesis. Functionally, plays a central role in 2-thiolation of mcm(5)S(2)U at tRNA wobble positions of tRNA(Lys), tRNA(Glu) and tRNA(Gln). May act by forming a heterodimer with NCS6 that ligates sulfur from thiocarboxylated URM1 onto the uridine of tRNAs at wobble position. Prior mcm(5) tRNA modification by the elongator complex is required for 2-thiolation. May also be involved in protein urmylation. The polypeptide is Cytoplasmic tRNA 2-thiolation protein 2 (Vanderwaltozyma polyspora (strain ATCC 22028 / DSM 70294 / BCRC 21397 / CBS 2163 / NBRC 10782 / NRRL Y-8283 / UCD 57-17) (Kluyveromyces polysporus)).